Reading from the N-terminus, the 87-residue chain is Small ribosomal subunit protein uS15c (87 aa).

This sequence belongs to the universal ribosomal protein uS15 family. Part of the 30S ribosomal subunit.

It is found in the plastid. It localises to the chloroplast. The sequence is that of Small ribosomal subunit protein uS15c (rps15) from Solanum bulbocastanum (Wild potato).